The sequence spans 234 residues: Leucyl/phenylalanyl-tRNA--protein transferase (234 aa).

The protein belongs to the L/F-transferase family.

Its subcellular location is the cytoplasm. The enzyme catalyses N-terminal L-lysyl-[protein] + L-leucyl-tRNA(Leu) = N-terminal L-leucyl-L-lysyl-[protein] + tRNA(Leu) + H(+). It catalyses the reaction N-terminal L-arginyl-[protein] + L-leucyl-tRNA(Leu) = N-terminal L-leucyl-L-arginyl-[protein] + tRNA(Leu) + H(+). It carries out the reaction L-phenylalanyl-tRNA(Phe) + an N-terminal L-alpha-aminoacyl-[protein] = an N-terminal L-phenylalanyl-L-alpha-aminoacyl-[protein] + tRNA(Phe). Functionally, functions in the N-end rule pathway of protein degradation where it conjugates Leu, Phe and, less efficiently, Met from aminoacyl-tRNAs to the N-termini of proteins containing an N-terminal arginine or lysine. The protein is Leucyl/phenylalanyl-tRNA--protein transferase of Escherichia coli O45:K1 (strain S88 / ExPEC).